Here is a 583-residue protein sequence, read N- to C-terminus: Propane 2-monooxygenase operon transcriptional activator MimR (583 aa).

Residues 320–513 enclose the Sigma-54 factor interaction domain; sequence LAGQSSSFRR…LRHVLTETVR (194 aa). ATP contacts are provided by residues 349–356 and 395–404; these read ERGSGRTY and SADFAVIVSD.

Its function is as follows. Acts as a transcriptional activator of the mimABCD operon encoding the propane 2-monooxygenase complex. In Mycolicibacterium smegmatis (strain ATCC 700084 / mc(2)155) (Mycobacterium smegmatis), this protein is Propane 2-monooxygenase operon transcriptional activator MimR.